A 224-amino-acid chain; its full sequence is Transposase for insertion sequence-like element IS431mec (224 aa).

Residues 33–52 (EILRERGVNVHHSTVYRWVQ) constitute a DNA-binding region (H-T-H motif). Positions 73–222 (WRIDETYIKI…SPCHEISIML (150 aa)) constitute an Integrase catalytic domain.

Involved in the transposition of the insertion sequence. The polypeptide is Transposase for insertion sequence-like element IS431mec (tnp) (Staphylococcus aureus (strain NCTC 8325 / PS 47)).